Consider the following 880-residue polypeptide: Phosphoinositide 3-kinase regulatory subunit 5 (880 aa).

Methionine 1 is modified (N-acetylmethionine). A heterodimerization region spans residues 25 to 101 (SLSRRSTSWS…TPHFPPDSDL (77 aa)). 4 disordered regions span residues 315 to 339 (GILG…TDGH), 389 to 416 (SGYV…GHRR), 454 to 510 (RRAG…SGDE), and 565 to 601 (HGTS…TPWE). Positions 318–335 (GDDEEEEEEEEEVEEDLE) are enriched in acidic residues. Phosphoserine occurs at positions 458 and 507. Over residues 571 to 585 (ACPPPRSQTPSPPTD) the composition is skewed to pro residues. Positions 653-753 (PILADMLLYY…WSNLEKVCTS (101 aa)) are interaction with beta-gamma G protein dimers.

Heterodimer of a catalytic subunit (PIK3CG/p120) and a regulatory (PIK3R5a/p101) subunit. Interacts with beta-gamma G protein dimers. Ubiquitously expressed with high expression in fetal brain compared to adult brain. Abundant expression is observed in cerebellum, cerebral cortex, cerebral meninges, and vermis cerebelli.

The protein localises to the nucleus. It localises to the cytoplasm. Its subcellular location is the cell membrane. Greatly activated by G gamma proteins. In terms of biological role, regulatory subunit of the PI3K gamma complex. Required for recruitment of the catalytic subunit to the plasma membrane via interaction with beta-gamma G protein dimers. Required for G protein-mediated activation of PIK3CG. This Homo sapiens (Human) protein is Phosphoinositide 3-kinase regulatory subunit 5 (PIK3R5).